Reading from the N-terminus, the 345-residue chain is Anthranilate phosphoribosyltransferase (345 aa).

5-phospho-alpha-D-ribose 1-diphosphate-binding positions include G84, 87-88 (GD), T92, 94-97 (NIST), 112-120 (KHGNRSVSS), and S124. G84 lines the anthranilate pocket. A Mg(2+)-binding site is contributed by S96. Position 115 (N115) interacts with anthranilate. R170 contacts anthranilate. Mg(2+)-binding residues include D229 and E230.

It belongs to the anthranilate phosphoribosyltransferase family. In terms of assembly, homodimer. It depends on Mg(2+) as a cofactor.

The catalysed reaction is N-(5-phospho-beta-D-ribosyl)anthranilate + diphosphate = 5-phospho-alpha-D-ribose 1-diphosphate + anthranilate. Its pathway is amino-acid biosynthesis; L-tryptophan biosynthesis; L-tryptophan from chorismate: step 2/5. Functionally, catalyzes the transfer of the phosphoribosyl group of 5-phosphorylribose-1-pyrophosphate (PRPP) to anthranilate to yield N-(5'-phosphoribosyl)-anthranilate (PRA). The polypeptide is Anthranilate phosphoribosyltransferase (Xanthomonas campestris pv. campestris (strain B100)).